The primary structure comprises 219 residues: Factor in the germline alpha (219 aa).

In terms of domain architecture, bHLH spans 65–117 (ERRRVANAKERERIKNLNRGFARLKALVPFLPQSRKPSKVDILKGATEYIQVL). Positions 124–151 (AKDSKKQDPDEQSYSNNSSESHTSSARQ) are disordered. Residues 136–148 (SYSNNSSESHTSS) are compositionally biased toward low complexity.

As to quaternary structure, heterodimer with TCF3/isoform E12. In terms of tissue distribution, germ cells. Expressed in the fetal ovary, but not by a range of other tissues. Expression increases across mid-gestation, rising some 40-fold by the time of primordial follicle formation.

The protein resides in the nucleus. Germline specific transcription factor implicated in postnatal oocyte-specific gene expression. Plays a key regulatory role in the expression of multiple oocyte-specific genes, including those that initiate folliculogenesis and those that encode the zona pellucida (ZP1, ZP2 and ZP3) required for fertilization and early embryonic survival. Essential for oocytes to survive and form primordial follicles. The persistence of FIGLA in adult females suggests that it may regulate additional pathways that are essential for normal ovarian development. Binds to the E-box (5'-CANNTG-3') of the ZPs (ZP1, ZP2, ZP3) promoters. The protein is Factor in the germline alpha (FIGLA) of Homo sapiens (Human).